The following is a 259-amino-acid chain: MDAWVRFSAQSQARERLCRAAQYACSLLGHALQRHGASPELQKQIRQLESHLSLGRKLLRLGNSADALESAKRAVHLSDVVLRFCITVSHLNRALYFACDNVLWAGKSGLAPRVDQEKWAQRSFRYYLFSLIMNLSRDAYEIRLLMEQESSACSRRLKGSGGGVPGGSETGGLGGPGTPGGGLPQLALKLRLQVLLLARVLRGHPPLLLDVVRNACDLFIPLDKLGLWRCGPGIVGLCGLVSSILSILTLIYPWLRLKP.

Lys-43 carries the post-translational modification N6-acetyllysine. The segment at 157–176 (LKGSGGGVPGGSETGGLGGP) is disordered. The span at 159 to 176 (GSGGGVPGGSETGGLGGP) shows a compositional bias: gly residues. The interaction with PEX19, PEX11G and FIS1 and peroxisome targeting stretch occupies residues 211–259 (VVRNACDLFIPLDKLGLWRCGPGIVGLCGLVSSILSILTLIYPWLRLKP). Residues 233 to 255 (GIVGLCGLVSSILSILTLIYPWL) traverse the membrane as a helical segment.

The protein belongs to the peroxin-11 family. Homodimer. Heterodimer with PEX11G. Interacts with PEX19. Interacts with FIS1.

It is found in the peroxisome membrane. In terms of biological role, involved in peroxisomal proliferation. May regulate peroxisome division by recruiting the dynamin-related GTPase DNM1L to the peroxisomal membrane. Promotes membrane protrusion and elongation on the peroxisomal surface. The polypeptide is Peroxisomal membrane protein 11B (PEX11B) (Homo sapiens (Human)).